Here is a 358-residue protein sequence, read N- to C-terminus: Trans-enoyl reductase pvhC (358 aa).

Residue 48 to 51 (VDSK) participates in NADP(+) binding. 134-141 (ISFLTSGL) serves as a coordination point for substrate. NADP(+)-binding positions include 169–172 (SSSC), 192–195 (SPHN), Tyr210, and 257–258 (LE). 278–282 (GPSLL) is a substrate binding site. 347–348 (VS) provides a ligand contact to NADP(+).

It belongs to the zinc-containing alcohol dehydrogenase family. Monomer.

The protein operates within secondary metabolite biosynthesis. Its function is as follows. Trans-enoyl reductase; part of the gene cluster that mediates the biosynthesis of varicidin A, an antifungal natural product containing a cis-octahydrodecalin core. The PKS module of pvhA together with the enoylreductase pvhC catalyze the formation of the polyketide unit which is then conjugated to L-isoleucine by the condensation domain of the NRPS module. Activity of the Dieckmann cyclase domain (RED) of pvhA results in release of an acyclic tetramate. The cytochrome P450 monooxygenase pvhE then catalyzes the oxidation of the C21 methyl group to a to carboxylate group. The methyltransferase pvhD then further methylates the pvhE product. The Diels-Alderase pvhB is able to catalyze Diels-Alder cycloaddition using both pvhE and pvhD products as substrates to form the decalin ring, yielding varicidin B and A, respectively. In Talaromyces variabilis (Penicillium variabile), this protein is Trans-enoyl reductase pvhC.